We begin with the raw amino-acid sequence, 276 residues long: Kallikrein-11 (276 aa).

Positions 1-44 (MRRLKSDWKLSTETREPGARPALLQARMILRLIALALVTGHVGG) are cleaved as a signal peptide. A propeptide spans 45–47 (ETR) (activation peptide). Residues 48 to 274 (IIKGYECRPH…YFNWIHEVMR (227 aa)) enclose the Peptidase S1 domain. Cystine bridges form between C54–C189, C73–C89, C168–C235, C200–C214, and C225–C250. The active-site Charge relay system is the H88. N-linked (GlcNAc...) asparagine glycosylation is present at N125. The active-site Charge relay system is D136. N-linked (GlcNAc...) asparagine glycosylation is found at N191 and N207. The active-site Charge relay system is S229. N-linked (GlcNAc...) asparagine glycosylation occurs at N236.

It belongs to the peptidase S1 family. Kallikrein subfamily. As to expression, expressed in brain and prostate (isoform 1) and prostate (isoform 2).

The protein localises to the secreted. In terms of biological role, possible multifunctional protease. Efficiently cleaves 'bz-Phe-Arg-4-methylcoumaryl-7-amide', a kallikrein substrate, and weakly cleaves other substrates for kallikrein and trypsin. In Mus musculus (Mouse), this protein is Kallikrein-11 (Klk11).